Consider the following 86-residue polypeptide: Small ribosomal subunit protein uS17 (86 aa).

It belongs to the universal ribosomal protein uS17 family. As to quaternary structure, part of the 30S ribosomal subunit.

Functionally, one of the primary rRNA binding proteins, it binds specifically to the 5'-end of 16S ribosomal RNA. The protein is Small ribosomal subunit protein uS17 of Exiguobacterium sp. (strain ATCC BAA-1283 / AT1b).